Consider the following 1194-residue polypeptide: IQ motif and SEC7 domain-containing protein 3 (1194 aa).

A coiled-coil region spans residues 20–56 (AIVQNQQSLIHTQRQRIDELERRLDELSAENRSLWEH). Disordered stretches follow at residues 62-149 (AQPP…EKER) and 229-272 (GRPS…QQPA). A compositionally biased stretch (pro residues) spans 63–78 (QPPPGLVPPPSAPLPA). Residues 79–92 (PAATAPAATAAQEP) show a composition bias toward low complexity. Residues 122–133 (PSSRVQTPQSPH) show a composition bias toward polar residues. Ser-255 carries the phosphoserine modification. Residues 311 to 340 (SRRAACTIQTAFRQYQLSKNFEKIRNSLLE) enclose the IQ domain. Disordered stretches follow at residues 439-471 (SAGQ…QGHS) and 515-610 (PAAV…KSAK). 2 stretches are compositionally biased toward low complexity: residues 561–572 (VAEAVVEEAVAT) and 600–610 (SSSSASTKSAK). The SEC7 domain maps to 646-839 (TLSTDTLRKR…VGIYERIQQK (194 aa)). The region spanning 852 to 985 (TKVEKSIVGM…LKESIAEVTE (134 aa)) is the PH domain. Disordered stretches follow at residues 1002–1099 (KTLS…PTPP) and 1137–1175 (SSDS…HQFC). The segment covering 1024–1035 (AKREAMAGEKAT) has biased composition (basic and acidic residues). Residues 1036 to 1052 (ESSGEVSIHNRLQTFQH) show a composition bias toward polar residues. Composition is skewed to pro residues over residues 1064 to 1099 (APSP…PTPP) and 1159 to 1169 (PPLPPPPPPYN).

Belongs to the BRAG family. In terms of assembly, interacts with DLG1 and DLG4. Interacts with GPHN. As to expression, expressed in brain. Localized to dendrites, as well as somas of neuronal cells.

It is found in the cytoplasm. It localises to the postsynaptic density. Functionally, acts as a guanine nucleotide exchange factor (GEF) for ARF1. In Rattus norvegicus (Rat), this protein is IQ motif and SEC7 domain-containing protein 3 (Iqsec3).